The primary structure comprises 503 residues: Probable cytosol aminopeptidase (503 aa).

The Mn(2+) site is built by K270 and D275. Residue K282 is part of the active site. Residues D293, D352, and E354 each contribute to the Mn(2+) site. R356 is an active-site residue.

This sequence belongs to the peptidase M17 family. Mn(2+) is required as a cofactor.

The protein localises to the cytoplasm. The enzyme catalyses Release of an N-terminal amino acid, Xaa-|-Yaa-, in which Xaa is preferably Leu, but may be other amino acids including Pro although not Arg or Lys, and Yaa may be Pro. Amino acid amides and methyl esters are also readily hydrolyzed, but rates on arylamides are exceedingly low.. It catalyses the reaction Release of an N-terminal amino acid, preferentially leucine, but not glutamic or aspartic acids.. In terms of biological role, presumably involved in the processing and regular turnover of intracellular proteins. Catalyzes the removal of unsubstituted N-terminal amino acids from various peptides. The polypeptide is Probable cytosol aminopeptidase (Escherichia fergusonii (strain ATCC 35469 / DSM 13698 / CCUG 18766 / IAM 14443 / JCM 21226 / LMG 7866 / NBRC 102419 / NCTC 12128 / CDC 0568-73)).